Reading from the N-terminus, the 317-residue chain is Small ribosomal subunit protein RACK1 (317 aa).

WD repeat units lie at residues 15–55 (GHNG…DNQY), 64–103 (GHSH…TTQR), 106–146 (GHKG…ATLT), 148–188 (HNDW…VNAD), 191–230 (GHTG…TLYT), 232–272 (EAKA…DELK), and 281–317 (AKDP…TPSA).

Belongs to the WD repeat G protein beta family. Ribosomal protein RACK1 subfamily. As to quaternary structure, component of the small ribosomal subunit. Mature ribosomes consist of a small (40S) and a large (60S) subunit. The 40S subunit contains about 32 different proteins and 1 molecule of RNA (18S). The 60S subunit contains 45 different proteins and 3 molecules of RNA (25S, 5.8S and 5S).

It is found in the cytoplasm. Functionally, component of the ribosome, a large ribonucleoprotein complex responsible for the synthesis of proteins in the cell. The small ribosomal subunit (SSU) binds messenger RNAs (mRNAs) and translates the encoded message by selecting cognate aminoacyl-transfer RNA (tRNA) molecules. The large subunit (LSU) contains the ribosomal catalytic site termed the peptidyl transferase center (PTC), which catalyzes the formation of peptide bonds, thereby polymerizing the amino acids delivered by tRNAs into a polypeptide chain. The nascent polypeptides leave the ribosome through a tunnel in the LSU and interact with protein factors that function in enzymatic processing, targeting, and the membrane insertion of nascent chains at the exit of the ribosomal tunnel. Located at the head of the 40S ribosomal subunit in the vicinity of the mRNA exit channel, it serves as a scaffold protein that can recruit other proteins to the ribosome. Involved in the negative regulation of translation of a specific subset of proteins. Plays a role in morphogenesis and pathogenesis. The sequence is that of Small ribosomal subunit protein RACK1 from Candida albicans (strain SC5314 / ATCC MYA-2876) (Yeast).